Reading from the N-terminus, the 198-residue chain is Endonuclease V (198 aa).

Mg(2+) contacts are provided by Asp38 and Asp101.

It belongs to the endonuclease V family. Requires Mg(2+) as cofactor.

Its subcellular location is the cytoplasm. It catalyses the reaction Endonucleolytic cleavage at apurinic or apyrimidinic sites to products with a 5'-phosphate.. DNA repair enzyme involved in the repair of deaminated bases. Selectively cleaves double-stranded DNA at the second phosphodiester bond 3' to a deoxyinosine leaving behind the intact lesion on the nicked DNA. In Saccharolobus islandicus (strain M.14.25 / Kamchatka #1) (Sulfolobus islandicus), this protein is Endonuclease V.